The following is a 321-amino-acid chain: Putative glucan endo-1,3-beta-glucosidase GVI (321 aa).

A signal peptide spans 1 to 6 (LAGVEG). Catalysis depends on E100, which acts as the Proton donor. The active-site Nucleophile is the E241.

The protein belongs to the glycosyl hydrolase 17 family.

It catalyses the reaction Hydrolysis of (1-&gt;3)-beta-D-glucosidic linkages in (1-&gt;3)-beta-D-glucans.. May provide a degree of protection against microbial invasion of germinated barley grain through its ability to degrade fungal cell wall polysaccharides. The polypeptide is Putative glucan endo-1,3-beta-glucosidase GVI (Hordeum vulgare (Barley)).